The following is a 334-amino-acid chain: Glyceraldehyde-3-phosphate dehydrogenase (334 aa).

Residues T12–I13 and G111 contribute to the NAD(+) site. Residue S140 to N142 participates in D-glyceraldehyde 3-phosphate binding. The active-site Nucleophile is the C141. Position 167 (R167) interacts with NAD(+). Residue H192 to G193 participates in D-glyceraldehyde 3-phosphate binding. An NAD(+)-binding site is contributed by Q298.

Belongs to the glyceraldehyde-3-phosphate dehydrogenase family. In terms of assembly, homotetramer.

The protein localises to the cytoplasm. The enzyme catalyses D-glyceraldehyde 3-phosphate + phosphate + NADP(+) = (2R)-3-phospho-glyceroyl phosphate + NADPH + H(+). The catalysed reaction is D-glyceraldehyde 3-phosphate + phosphate + NAD(+) = (2R)-3-phospho-glyceroyl phosphate + NADH + H(+). The protein operates within carbohydrate degradation; glycolysis; pyruvate from D-glyceraldehyde 3-phosphate: step 1/5. This chain is Glyceraldehyde-3-phosphate dehydrogenase, found in Thermococcus sibiricus (strain DSM 12597 / MM 739).